The sequence spans 149 residues: MERTFIMIKPDGVQRQLIGEIVGRFEKKGFKLVAMKVMTVSQELAEKHYEALNDKPFFSGLVNFICSSPVVAMVWEGNSIVSTSRQMIGATDPHAAAPGTIRGDYGVSVGRNIIHGSDAIETAKREISLWFKDEEVNEWDATLNPWLYE.

Lys9, Phe57, Arg85, Thr91, Arg102, and Asn112 together coordinate ATP. Residue His115 is the Pros-phosphohistidine intermediate of the active site.

The protein belongs to the NDK family. Homotetramer. The cofactor is Mg(2+).

The protein resides in the cytoplasm. The enzyme catalyses a 2'-deoxyribonucleoside 5'-diphosphate + ATP = a 2'-deoxyribonucleoside 5'-triphosphate + ADP. The catalysed reaction is a ribonucleoside 5'-diphosphate + ATP = a ribonucleoside 5'-triphosphate + ADP. Its function is as follows. Major role in the synthesis of nucleoside triphosphates other than ATP. The ATP gamma phosphate is transferred to the NDP beta phosphate via a ping-pong mechanism, using a phosphorylated active-site intermediate. The polypeptide is Nucleoside diphosphate kinase (Synechocystis sp. (strain ATCC 27184 / PCC 6803 / Kazusa)).